The chain runs to 693 residues: MTPQSLLQTTLFLLSLLFLVQGAHGRGHREDFRFCSQRNQTHRSSLHYKPTPDLRISIENSEEALTVHAPFPAAHPASRSFPDPRGLYHFCLYWNRHAGRLHLLYGKRDFLLSDKASSLLCFQHQEESLAQGPPLLATSVTSWWSPQNISLPSAASFTFSFHSPPHTAAHNASVDMCELKRDLQLLSQFLKHPQKASRRPSAAPASQQLQSLESKLTSVRFMGDMVSFEEDRINATVWKLQPTAGLQDLHIHSRQEEEQSEIMEYSVLLPRTLFQRTKGRSGEAEKRLLLVDFSSQALFQDKNSSQVLGEKVLGIVVQNTKVANLTEPVVLTFQHQLQPKNVTLQCVFWVEDPTLSSPGHWSSAGCETVRRETQTSCFCNHLTYFAVLMVSSVEVDAVHKHYLSLLSYVGCVVSALACLVTIAAYLCSRVPLPCRRKPRDYTIKVHMNLLLAVFLLDTSFLLSEPVALTGSEAGCRASAIFLHFSLLTCLSWMGLEGYNLYRLVVEVFGTYVPGYLLKLSAMGWGFPIFLVTLVALVDVDNYGPIILAVHRTPEGVIYPSMCWIRDSLVSYITNLGLFSLVFLFNMAMLATMVVQILRLRPHTQKWSHVLTLLGLSLVLGLPWALIFFSFASGTFQLVVLYLFSIITSFQGFLIFIWYWSMRLQARGGPSPLKSNSDSARLPISSGSTSSSRI.

The first 25 residues, 1-25 (MTPQSLLQTTLFLLSLLFLVQGAHG), serve as a signal peptide directing secretion. A heparin-binding site is contributed by 26 to 33 (RGHREDFR). The Extracellular segment spans residues 26–401 (RGHREDFRFC…SVEVDAVHKH (376 aa)). 2 cysteine pairs are disulfide-bonded: Cys35–Cys91 and Cys121–Cys177. Asn39, Asn148, and Asn171 each carry an N-linked (GlcNAc...) asparagine glycan. 190–200 (LKHPQKASRRP) lines the heparin pocket. Residues 224 to 395 (DMVSFEEDRI…AVLMVSSVEV (172 aa)) enclose the GAIN-B domain. N-linked (GlcNAc...) asparagine glycosylation is found at Asn234, Asn303, Asn324, and Asn341. Cystine bridges form between Cys346–Cys377 and Cys366–Cys379. A GPS region spans residues 346 to 395 (CVFWVEDPTLSSPGHWSSAGCETVRRETQTSCFCNHLTYFAVLMVSSVEV). The tract at residues 384-397 (YFAVLMVSSVEVDA) is stachel. A helical transmembrane segment spans residues 402–424 (YLSLLSYVGCVVSALACLVTIAA). Over 425 to 437 (YLCSRVPLPCRRK) the chain is Cytoplasmic. A helical transmembrane segment spans residues 438–460 (PRDYTIKVHMNLLLAVFLLDTSF). The Extracellular segment spans residues 461-465 (LLSEP). A helical membrane pass occupies residues 466–495 (VALTGSEAGCRASAIFLHFSLLTCLSWMGL). Cysteines 475 and 562 form a disulfide. At 496 to 510 (EGYNLYRLVVEVFGT) the chain is on the cytoplasmic side. The helical transmembrane segment at 511 to 533 (YVPGYLLKLSAMGWGFPIFLVTL) threads the bilayer. Residues 534–562 (VALVDVDNYGPIILAVHRTPEGVIYPSMC) are Extracellular-facing. Residues 563-588 (WIRDSLVSYITNLGLFSLVFLFNMAM) form a helical membrane-spanning segment. Residues 589-602 (LATMVVQILRLRPH) lie on the Cytoplasmic side of the membrane. A helical transmembrane segment spans residues 603 to 624 (TQKWSHVLTLLGLSLVLGLPWA). Residues 625–628 (LIFF) are Extracellular-facing. A helical membrane pass occupies residues 629–654 (SFASGTFQLVVLYLFSIITSFQGFLI). Topologically, residues 655 to 693 (FIWYWSMRLQARGGPSPLKSNSDSARLPISSGSTSSSRI) are cytoplasmic. Residues 670-693 (SPLKSNSDSARLPISSGSTSSSRI) form a disordered region. Low complexity predominate over residues 684–693 (SSGSTSSSRI).

Belongs to the G-protein coupled receptor 2 family. LN-TM7 subfamily. Heterodimer of 2 chains generated by proteolytic processing; the large extracellular N-terminal fragment (ADGRG1 NT) and the membrane-bound C-terminal fragment (ADGRG1-CT) predominantly remain associated and non-covalently linked. ADGRG1 NT self-associates in a trans-trans manner; the homophilic interaction enhances receptor signaling. Interacts with TGM2. Interacts with heparin; leading to the reduction of ADGRG1 shedding. Interacts with COL3A1. Part of a GPCR-tetraspanin complex at least consisting of ADGRG1, CD81, eventually CD9, and GNA11 in which CD81 is enhancing the association of ADGRG1 with GNA11. Autoproteolytically cleaved into 2 fragments; the large extracellular N-terminal fragment (ADGRG1 NT) and the membrane-bound C-terminal fragment (ADGRG1 CT) predominantly remain associated and non-covalently linked. Shedding to yield the secreted ADGRG1 N-terminal fragment seems to involve metalloprotease(s). Post-translationally, N-glycosylated. Contains sialic acid residues. In terms of processing, ubiquitinated. Undergoes polyubiquitination upon activation. Widely distributed with highest levels found in thyroid gland, brain and heart. Expressed in a great number of tumor cells. Expression is down-regulated in different tumors from highly metastatic cells.

Its subcellular location is the cell membrane. It is found in the secreted. It localises to the membrane raft. With respect to regulation, forms a heterodimer of 2 chains generated by proteolytic processing that remain associated through non-covalent interactions mediated by the GAIN-B domain. In the inactivated receptor, the Stachel sequence (also named stalk) is embedded in the GAIN-B domain, where it adopts a beta-strand conformation. On activation, the Stachel moves into the 7 transmembrane region and adopts a twisted hook-shaped configuration that forms contacts within the receptor, leading to coupling of a G-alpha protein, which activates signaling. The cleaved GAIN-B and N-terminal domains can then dissociate from the rest of the receptor. Functionally, adhesion G-protein coupled receptor (aGPCR) for steroid hormone 17alpha-hydroxypregnenolone (17-OH), which is involved in cell adhesion and cell-cell interactions. Ligand binding causes a conformation change that triggers signaling via guanine nucleotide-binding proteins (G proteins) and modulates the activity of downstream effectors, such as RhoA pathway. ADGRG1 is coupled to G(12) and/or G(13) G proteins (GNA12 and GNA13, respectively) and mediates the activation Rho small GTPases. Acts as a potent suppressor of ferroptosis: binding to 17-OH-binding initiates signaling that down-regulates CD36 and alleviates ferroptosis-induced liver injury. Ligand-binding also induces cell adhesion activity via association with proteins such as collagen III/COL3A1 and TGM2. Mediates cell matrix adhesion in developing neurons and hematopoietic stem cells. Involved in cortical development, specifically in maintenance of the pial basement membrane integrity and in cortical lamination: association with COL3A1 in the developing brain inhibits neuronal migration via activation of the RhoA pathway. Together with TGM2, acts as a regulator of myelination and myelin repair in oligodendrocyte precursor cells. Acts as a hemostatic sensor of shear force: G protein-coupled receptor signaling is activated in response to shear force in platelets, promoting G(13) G protein signaling, and platelet shape change and aggregation in a COL3A1-dependent manner. Acts as an inhibitor of VEGFA production thereby inhibiting angiogenesis through a signaling pathway mediated by PRKCA. Plays a role in the maintenance of hematopoietic stem cells in bone marrow niche. Plays an essential role in testis development. This chain is Adhesion G-protein coupled receptor G1, found in Homo sapiens (Human).